The following is a 156-amino-acid chain: Small ribosomal subunit protein uS7 (156 aa).

The protein belongs to the universal ribosomal protein uS7 family. In terms of assembly, part of the 30S ribosomal subunit. Contacts proteins S9 and S11.

Functionally, one of the primary rRNA binding proteins, it binds directly to 16S rRNA where it nucleates assembly of the head domain of the 30S subunit. Is located at the subunit interface close to the decoding center, probably blocks exit of the E-site tRNA. This chain is Small ribosomal subunit protein uS7, found in Cupriavidus necator (strain ATCC 17699 / DSM 428 / KCTC 22496 / NCIMB 10442 / H16 / Stanier 337) (Ralstonia eutropha).